Consider the following 249-residue polypeptide: 2,3-bisphosphoglycerate-dependent phosphoglycerate mutase (249 aa).

Substrate is bound by residues 8–15 (RHGESVWN), 21–22 (TG), arginine 60, 87–90 (ERHY), lysine 98, 114–115 (RR), and 183–184 (GN). The active-site Tele-phosphohistidine intermediate is the histidine 9. The active-site Proton donor/acceptor is glutamate 87.

This sequence belongs to the phosphoglycerate mutase family. BPG-dependent PGAM subfamily.

The enzyme catalyses (2R)-2-phosphoglycerate = (2R)-3-phosphoglycerate. It functions in the pathway carbohydrate degradation; glycolysis; pyruvate from D-glyceraldehyde 3-phosphate: step 3/5. Functionally, catalyzes the interconversion of 2-phosphoglycerate and 3-phosphoglycerate. This Chloroherpeton thalassium (strain ATCC 35110 / GB-78) protein is 2,3-bisphosphoglycerate-dependent phosphoglycerate mutase.